A 550-amino-acid chain; its full sequence is MGMFCNQCEQAAKGVGCEIMGVCGKNPEVAALQDLMLYGLKGLAIYADKARELGARDEAIDLFMIEGLFTTVTNVDFDPVSLAGKLRTCYDMKEKAKSLYETAYREKNGGHAPAIAAGPAAWVIASDLEGLVKQGLEHGINTHHTDADVRSAIEILIYGLKGMAAYADHAYILGKKDEEVFAFFHKAMAATADPAKGLMDFVGLSMECGKLNIKVMGMLNEGHVDHYGHPVPTKVPTGTRRNKGILVSGHDLRMLEELLKQTAGKGIDIYTHGEMLPAHGYPGLKQKYPHLYGNFGGAWQDQAKEFPLFPGAIIFNTNCIQRPADSYKDRLFSWGQVGWPGVKHISGWDFSEVINKALECPELADAPEKEILTGFGHNAVLGVADKVIEGVKAGAIKHFFLIGGCDGAKPGRNYYTELAEKVPQDCVILTLACGKYRFNKLEFGDIGGIPRLLDIGQCNDAYSALQIALALANAFNCGVNDLPLSMILSWYEQKAVVILLSLLHLGIRNIKIGPSLPAFVTPNVLNFLVENFNLGPITTVEADLKAALGQ.

4 residues coordinate [4Fe-4S] cluster: Cys5, Cys8, Cys17, and Cys23. Hybrid [4Fe-2O-2S] cluster is bound by residues His250, Glu274, Cys319, Cys405, Cys433, Cys458, Glu492, and Lys494. Cys405 carries the cysteine persulfide modification.

Belongs to the HCP family. The cofactor is [4Fe-4S] cluster. Hybrid [4Fe-2O-2S] cluster serves as cofactor.

The protein localises to the cytoplasm. It carries out the reaction A + NH4(+) + H2O = hydroxylamine + AH2 + H(+). Functionally, catalyzes the reduction of hydroxylamine to form NH(3) and H(2)O. The protein is Hydroxylamine reductase of Geobacter sulfurreducens (strain ATCC 51573 / DSM 12127 / PCA).